Here is a 305-residue protein sequence, read N- to C-terminus: Beta-carotene 3-hydroxylase, chloroplastic (305 aa).

The transit peptide at 1–41 (MAFAMSSSLTLFQYQSFGKKPFFSRRRDFAGCSMMNPLVAR) directs the protein to the chloroplast. 2 helical membrane-spanning segments follow: residues 98 to 118 (YLVA…AAVY) and 129 to 149 (AVPL…AVGM). The Fatty acid hydroxylase domain maps to 146 to 272 (AVGMEYWARW…KFNGVPYGLF (127 aa)). The Histidine box-1 signature appears at 157 to 162 (HRALWH). A Histidine box-2 motif is present at residues 169–173 (HESHH). A run of 2 helical transmembrane segments spans residues 184 to 204 (DVFA…GFFH) and 207 to 227 (FFSG…MAYM). The Histidine box-3 motif lies at 230-235 (HDGLVH). The Histidine box-4 signature appears at 256–260 (HQIHH).

This sequence belongs to the sterol desaturase family. In terms of assembly, homodimer. Expressed in flower buds and lips. Detected in roots and leaves.

The protein localises to the plastid. It localises to the chloroplast membrane. The catalysed reaction is all-trans-beta-carotene + 4 reduced [2Fe-2S]-[ferredoxin] + 2 O2 + 4 H(+) = all-trans-zeaxanthin + 4 oxidized [2Fe-2S]-[ferredoxin] + 2 H2O. Nonheme diiron monooxygenase involved in the biosynthesis of xanthophylls. Specific for beta-ring hydroxylations of beta-carotene. Uses ferredoxin as an electron donor. This Oncidium hybrid cultivar (Orchid) protein is Beta-carotene 3-hydroxylase, chloroplastic (BHY).